Consider the following 123-residue polypeptide: Large ribosomal subunit protein uL14 (123 aa).

Belongs to the universal ribosomal protein uL14 family. As to quaternary structure, part of the 50S ribosomal subunit. Forms a cluster with proteins L3 and L19. In the 70S ribosome, L14 and L19 interact and together make contacts with the 16S rRNA in bridges B5 and B8.

Its function is as follows. Binds to 23S rRNA. Forms part of two intersubunit bridges in the 70S ribosome. In Koribacter versatilis (strain Ellin345), this protein is Large ribosomal subunit protein uL14.